A 119-amino-acid chain; its full sequence is Large ribosomal subunit protein bL19 (119 aa).

This sequence belongs to the bacterial ribosomal protein bL19 family.

Its function is as follows. This protein is located at the 30S-50S ribosomal subunit interface and may play a role in the structure and function of the aminoacyl-tRNA binding site. This is Large ribosomal subunit protein bL19 from Petrotoga mobilis (strain DSM 10674 / SJ95).